The primary structure comprises 140 residues: Sec-independent protein translocase protein TatB (140 aa).

A helical membrane pass occupies residues 1–21 (MFDIGFSELLLIAVVALVVLG). Residues 119-140 (VHVTSPPPSTSTHGNNGQEKSQ) are disordered. The segment covering 128 to 140 (TSTHGNNGQEKSQ) has biased composition (polar residues).

This sequence belongs to the TatB family. The Tat system comprises two distinct complexes: a TatABC complex, containing multiple copies of TatA, TatB and TatC subunits, and a separate TatA complex, containing only TatA subunits. Substrates initially bind to the TatABC complex, which probably triggers association of the separate TatA complex to form the active translocon.

Its subcellular location is the cell inner membrane. Part of the twin-arginine translocation (Tat) system that transports large folded proteins containing a characteristic twin-arginine motif in their signal peptide across membranes. Together with TatC, TatB is part of a receptor directly interacting with Tat signal peptides. TatB may form an oligomeric binding site that transiently accommodates folded Tat precursor proteins before their translocation. The sequence is that of Sec-independent protein translocase protein TatB from Xylella fastidiosa (strain 9a5c).